Reading from the N-terminus, the 500-residue chain is Probable cardiolipin synthase YwiE (500 aa).

Transmembrane regions (helical) follow at residues Leu6–Val26, Phe31–Leu51, and Thr59–Phe79. 2 consecutive PLD phosphodiesterase domains span residues Leu237–Tyr264 and Gln413–Ser440. Catalysis depends on residues His242, Lys244, Asp249, His418, Lys420, and Asp425.

It belongs to the phospholipase D family. Cardiolipin synthase subfamily.

The protein resides in the cell membrane. The enzyme catalyses 2 a 1,2-diacyl-sn-glycero-3-phospho-(1'-sn-glycerol) = a cardiolipin + glycerol. Catalyzes the reversible phosphatidyl group transfer from one phosphatidylglycerol molecule to another to form cardiolipin (CL) (diphosphatidylglycerol) and glycerol. May have a role in the heat shock response since the level of the transcript of ywiE increases after a heat shock. The polypeptide is Probable cardiolipin synthase YwiE (ywiE) (Bacillus subtilis (strain 168)).